The following is a 123-amino-acid chain: NADH-quinone oxidoreductase subunit A (123 aa).

3 consecutive transmembrane segments (helical) span residues 6–26 (LTPYLPLAVVLLLAGGMAMLI), 66–86 (VVALLFIVFDVEAVFLYPWAV), and 93–113 (WFGYVEMLVFAVTLVVGLIYI).

The protein belongs to the complex I subunit 3 family. As to quaternary structure, NDH-1 is composed of 14 different subunits. Subunits NuoA, H, J, K, L, M, N constitute the membrane sector of the complex.

It is found in the cell inner membrane. It carries out the reaction a quinone + NADH + 5 H(+)(in) = a quinol + NAD(+) + 4 H(+)(out). NDH-1 shuttles electrons from NADH, via FMN and iron-sulfur (Fe-S) centers, to quinones in the respiratory chain. The immediate electron acceptor for the enzyme in this species is believed to be ubiquinone. Couples the redox reaction to proton translocation (for every two electrons transferred, four hydrogen ions are translocated across the cytoplasmic membrane), and thus conserves the redox energy in a proton gradient. The protein is NADH-quinone oxidoreductase subunit A of Myxococcus xanthus (strain DK1622).